A 443-amino-acid polypeptide reads, in one-letter code: Probable D-serine dehydratase (443 aa).

Residue K116 is modified to N6-(pyridoxal phosphate)lysine.

This sequence belongs to the serine/threonine dehydratase family. DsdA subfamily. The cofactor is pyridoxal 5'-phosphate.

The enzyme catalyses D-serine = pyruvate + NH4(+). The sequence is that of Probable D-serine dehydratase from Bacillus cereus (strain ATCC 14579 / DSM 31 / CCUG 7414 / JCM 2152 / NBRC 15305 / NCIMB 9373 / NCTC 2599 / NRRL B-3711).